Here is a 339-residue protein sequence, read N- to C-terminus: MINSYKDSGVDKEEGYKAVELMKKNVLKTHNKSVLTNLGSFGAMYELGQYKNPVLISGTDGVGTKLEIAMKQKKYDTVGIDCVAMCVNDVLCHGAKPLFFLDYLACGKLDAEVAAQLVSGVTEGCLQSYAALVGGETAEMPGFYKEGDYDIAGFCVGIVEKEDLIDGSKVKEGNKIIAVASSGFHSNGYSLVRKVFTDYNEKIFLKEYGENVTMGDVLLTPTKIYVKPILKVLEKFNVNGMAHITGGGLFENLPRCMGKNLSPVVFKDKVRVPEIFKLIAERSKIKEEELFGTFNMGVGFTLVVEEKDVETIIELLTSLGETAYEIGHIEKGDHSLCLK.

Belongs to the AIR synthase family.

Its subcellular location is the cytoplasm. It catalyses the reaction 2-formamido-N(1)-(5-O-phospho-beta-D-ribosyl)acetamidine + ATP = 5-amino-1-(5-phospho-beta-D-ribosyl)imidazole + ADP + phosphate + H(+). Its pathway is purine metabolism; IMP biosynthesis via de novo pathway; 5-amino-1-(5-phospho-D-ribosyl)imidazole from N(2)-formyl-N(1)-(5-phospho-D-ribosyl)glycinamide: step 2/2. This is Phosphoribosylformylglycinamidine cyclo-ligase from Fusobacterium nucleatum subsp. nucleatum (strain ATCC 25586 / DSM 15643 / BCRC 10681 / CIP 101130 / JCM 8532 / KCTC 2640 / LMG 13131 / VPI 4355).